A 697-amino-acid chain; its full sequence is Serotransferrin (697 aa).

The signal sequence occupies residues 1-19 (MRLTVGALLACAALGLCLA). 2 Transferrin-like domains span residues 25–347 (VKWC…NQQE) and 360–682 (VKWC…NMRK). 2 disulfides stabilise this stretch: Cys-28-Cys-67 and Cys-38-Cys-58. Position 42 is a dimethylated arginine (Arg-42). Residues Asp-82 and Tyr-114 each coordinate Fe(3+). 8 cysteine pairs are disulfide-bonded: Cys-137–Cys-213, Cys-156–Cys-350, Cys-177–Cys-193, Cys-180–Cys-196, Cys-190–Cys-198, Cys-246–Cys-260, Cys-363–Cys-395, and Cys-373–Cys-386. Residues Thr-139, Arg-143, Ala-145, and Gly-146 each contribute to the hydrogencarbonate site. Tyr-207 is a Fe(3+) binding site. Residue His-268 coordinates Fe(3+). At Ser-388 the chain carries Phosphoserine. 2 residues coordinate Fe(3+): Asp-410 and Tyr-448. Intrachain disulfides connect Cys-420-Cys-692, Cys-435-Cys-655, Cys-472-Cys-543, Cys-496-Cys-683, Cys-506-Cys-520, Cys-517-Cys-526, Cys-583-Cys-597, and Cys-633-Cys-638. Thr-474, Arg-478, Ala-480, and Gly-481 together coordinate hydrogencarbonate. An N-linked (GlcNAc...) asparagine glycan is attached at Asn-513. Residue Tyr-537 participates in Fe(3+) binding. His-605 is a Fe(3+) binding site. Residue Ser-684 is modified to Phosphoserine.

The protein belongs to the transferrin family. Monomer. Part of a complex composed of SLC40A1/ferroportin, TF/transferrin and HEPH/hephaestin that transfers iron from cells to transferrin. As to expression, expressed by the liver and secreted in plasma.

It is found in the secreted. Transferrins are iron binding transport proteins which can bind two Fe(3+) ions in association with the binding of an anion, usually bicarbonate. It is responsible for the transport of iron from sites of absorption and heme degradation to those of storage and utilization. Serum transferrin may also have a further role in stimulating cell proliferation. This chain is Serotransferrin (Tf), found in Mus musculus (Mouse).